Consider the following 353-residue polypeptide: BLOC-1-related complex subunit 6 (353 aa).

Positions 23 to 194 (AIFGDGPGQT…SGAGGGRRAT (172 aa)) are disordered. Positions 102 to 126 (FDLHGSSRRKDPEPPEAKPESERVC) are enriched in basic and acidic residues. 2 positions are modified to phosphoserine: Ser-130 and Ser-166. Gly residues predominate over residues 172–191 (GACGGPASSGGAESGAGGGR). Thr-194 carries the post-translational modification Phosphothreonine. Ser-197 bears the Phosphoserine mark. Residues 225-253 (LSGAPQPPPPAPTRPCSAPTPTPAIPPID) form a disordered region. Residues 229–253 (PQPPPPAPTRPCSAPTPTPAIPPID) show a composition bias toward pro residues.

This sequence belongs to the BORCS6 family. Component of the BLOC-one-related complex (BORC) which is composed of BLOC1S1, BLOC1S2, BORCS5, BORCS6, BORCS7, BORCS8, KXD1 and SNAPIN.

Its subcellular location is the lysosome membrane. As part of the BORC complex may play a role in lysosomes movement and localization at the cell periphery. Associated with the cytosolic face of lysosomes, the BORC complex may recruit ARL8B and couple lysosomes to microtubule plus-end-directed kinesin motor. The chain is BLOC-1-related complex subunit 6 from Bos taurus (Bovine).